The sequence spans 288 residues: Probable ketoamine kinase VC_1539 (288 aa).

92–94 (NYL) provides a ligand contact to ATP. Catalysis depends on aspartate 195, which acts as the Proton acceptor.

The protein belongs to the fructosamine kinase family.

In terms of biological role, ketoamine kinase that phosphorylates ketoamines on the third carbon of the sugar moiety to generate ketoamine 3-phosphate. The chain is Probable ketoamine kinase VC_1539 from Vibrio cholerae serotype O1 (strain ATCC 39315 / El Tor Inaba N16961).